The primary structure comprises 1094 residues: Probable arabinosyltransferase A (1094 aa).

13 helical membrane passes run Ile-12 to Leu-34, Ala-205 to Leu-224, Gly-247 to Ala-269, Val-322 to Leu-344, Ser-356 to Phe-375, Ala-408 to Ala-430, Gly-451 to Val-470, Phe-519 to Leu-536, Gly-543 to Phe-565, Gly-575 to Leu-597, Thr-604 to Tyr-626, Ile-641 to Trp-663, and Ile-684 to Ala-706.

The protein belongs to the emb family.

The protein localises to the cell membrane. Arabinosyl transferase responsible for the polymerization of arabinose into the arabinan of arabinogalactan. In Mycobacterium tuberculosis (strain CDC 1551 / Oshkosh), this protein is Probable arabinosyltransferase A (embA).